A 347-amino-acid chain; its full sequence is MKFVDEATIKVKAGDGGNGCVSFRREKFVPFGGPDGGDGGDGGSVYLVATHDLNTLADFRFQRHYEAQRGENGSGRNMTGASGADLEVPVPVGTLAYDAETEELIGDLVEHGQRLLVAQGGFHGLGNTRYKTSTNRAPRQSKPGTPGELRVLRLELKLLADVGLLGLPNAGKSTLITQVSGARPKIADYPFTTLYPGLGVVRVGPLQSFVMADIPGLIEGAAEGAGLGIQFLKHLSRTRLLLHLVDVAPADPAEDPVAAVHTIEAELQQFSEDLASRPRWLVLNKIDLIAPDERESFTKELVARLGWEGPVYAISAATGEACESLMQAIMKYLEEAQSHDADTATAG.

The 159-residue stretch at 1–159 (MKFVDEATIK…RVLRLELKLL (159 aa)) folds into the Obg domain. A disordered region spans residues 127-146 (NTRYKTSTNRAPRQSKPGTP). A compositionally biased stretch (polar residues) spans 129-138 (RYKTSTNRAP). The 175-residue stretch at 160-334 (ADVGLLGLPN…LMQAIMKYLE (175 aa)) folds into the OBG-type G domain. Residues 166–173 (GLPNAGKS), 191–195 (FTTLY), 213–216 (DIPG), 284–287 (NKID), and 315–317 (SAA) contribute to the GTP site. Residues S173 and T193 each contribute to the Mg(2+) site.

Belongs to the TRAFAC class OBG-HflX-like GTPase superfamily. OBG GTPase family. Monomer. Mg(2+) serves as cofactor.

It is found in the cytoplasm. In terms of biological role, an essential GTPase which binds GTP, GDP and possibly (p)ppGpp with moderate affinity, with high nucleotide exchange rates and a fairly low GTP hydrolysis rate. Plays a role in control of the cell cycle, stress response, ribosome biogenesis and in those bacteria that undergo differentiation, in morphogenesis control. The chain is GTPase Obg from Thioalkalivibrio sulfidiphilus (strain HL-EbGR7).